A 318-amino-acid chain; its full sequence is Aspartate carbamoyltransferase catalytic subunit (318 aa).

Residues Arg-55 and Thr-56 each contribute to the carbamoyl phosphate site. Residue Lys-83 participates in L-aspartate binding. Residues Arg-105, His-138, and Gln-141 each coordinate carbamoyl phosphate. L-aspartate-binding residues include Arg-171 and Arg-225. Residues Gly-266 and Pro-267 each contribute to the carbamoyl phosphate site.

The protein belongs to the aspartate/ornithine carbamoyltransferase superfamily. ATCase family. As to quaternary structure, heterododecamer (2C3:3R2) of six catalytic PyrB chains organized as two trimers (C3), and six regulatory PyrI chains organized as three dimers (R2).

It catalyses the reaction carbamoyl phosphate + L-aspartate = N-carbamoyl-L-aspartate + phosphate + H(+). It functions in the pathway pyrimidine metabolism; UMP biosynthesis via de novo pathway; (S)-dihydroorotate from bicarbonate: step 2/3. Its function is as follows. Catalyzes the condensation of carbamoyl phosphate and aspartate to form carbamoyl aspartate and inorganic phosphate, the committed step in the de novo pyrimidine nucleotide biosynthesis pathway. The polypeptide is Aspartate carbamoyltransferase catalytic subunit (Corynebacterium kroppenstedtii (strain DSM 44385 / JCM 11950 / CIP 105744 / CCUG 35717)).